Reading from the N-terminus, the 221-residue chain is Abscisic acid receptor PYL1 (221 aa).

Residues 1–11 are compositionally biased toward low complexity; it reads MANSESSSSPV. A disordered region spans residues 1 to 22; the sequence is MANSESSSSPVNEEENSQRIST. Ala2 is subject to N-acetylalanine. An START-like region spans residues 50-206; sequence YQLGNGRCSS…NLQKLASITE (157 aa). Residues Lys86, 116–121, 143–149, and Glu171 contribute to the abscisate site; these read ANTSRE and RLRNYKS. A Gate loop motif is present at residues 112–116; that stretch reads SGLPA. The short motif at 142 to 144 is the Latch loop element; the sequence is HRL.

Belongs to the PYR/PYL/RCAR abscisic acid intracellular receptor family. As to quaternary structure, homodimer. Binds ABA on one subunit only. Interacts with HAB1, ABI1 and ABI2, and possibly with other PP2Cs. Binds to CARs protein in an ABA-independent manner, both at the plasma membrane and in the nucleus. Interacts directly with CAR1 and CAR4.

Its subcellular location is the cytoplasm. It is found in the nucleus. It localises to the cell membrane. Its function is as follows. Receptor for abscisic acid (ABA) required for ABA-mediated responses such as stomatal closure and germination inhibition. Inhibits the activity of group-A protein phosphatases type 2C (PP2Cs) when activated by ABA. Can be activated by both (-)-ABA and (+)-ABA. The chain is Abscisic acid receptor PYL1 (PYL1) from Arabidopsis thaliana (Mouse-ear cress).